Reading from the N-terminus, the 163-residue chain is Transcription antitermination protein NusB (163 aa).

The protein belongs to the NusB family.

Its function is as follows. Involved in transcription antitermination. Required for transcription of ribosomal RNA (rRNA) genes. Binds specifically to the boxA antiterminator sequence of the ribosomal RNA (rrn) operons. The chain is Transcription antitermination protein NusB from Chlorobium luteolum (strain DSM 273 / BCRC 81028 / 2530) (Pelodictyon luteolum).